The chain runs to 211 residues: MRVRKRKGAQEHLENNPHYVILEPEAAKGRWCEVFGNDHPIHIEVGSGKGAFITGMALKNPEINYIGIDIQLSVLSYALDKVLASQAPNVRLLRVDGSSLTNYFDAGEIDMMYLNFSDPWPKSRHEKRRLTHRSFLDTYKQILPENGEIHFKTDNRGLFEYSLASFSQYGMTLKQVWLDLHASDYQGNVMTEYEARFAKKGQVIYRLEATF.

Residues Glu-44, Asp-69, Asp-96, and Asp-118 each contribute to the S-adenosyl-L-methionine site. Asp-118 is a catalytic residue. Position 122 (Lys-122) interacts with substrate. Positions 124 to 129 are interaction with RNA; it reads RHEKRR. Substrate-binding positions include Asp-154 and 191-194; that span reads TEYE.

Belongs to the class I-like SAM-binding methyltransferase superfamily. TrmB family.

It catalyses the reaction guanosine(46) in tRNA + S-adenosyl-L-methionine = N(7)-methylguanosine(46) in tRNA + S-adenosyl-L-homocysteine. Its pathway is tRNA modification; N(7)-methylguanine-tRNA biosynthesis. Catalyzes the formation of N(7)-methylguanine at position 46 (m7G46) in tRNA. The polypeptide is tRNA (guanine-N(7)-)-methyltransferase (Streptococcus equi subsp. zooepidemicus (strain H70)).